The following is a 246-amino-acid chain: Alpha-tubulin N-acetyltransferase (246 aa).

In terms of domain architecture, N-acetyltransferase spans 21–202; that stretch reads LTLVPDGVSR…NNFVVFHSFF (182 aa). Residues 135–148 and 172–181 each bind acetyl-CoA; these read FYVD…GYGK and SNKLLGFLRK.

It belongs to the acetyltransferase ATAT1 family.

The enzyme catalyses L-lysyl-[alpha-tubulin] + acetyl-CoA = N(6)-acetyl-L-lysyl-[alpha-tubulin] + CoA + H(+). Functionally, specifically acetylates 'Lys-40' in alpha-tubulin on the lumenal side of microtubules. Promotes microtubule destabilization and accelerates microtubule dynamics; this activity may be independent of acetylation activity. Acetylates alpha-tubulin with a slow enzymatic rate, due to a catalytic site that is not optimized for acetyl transfer. Enters the microtubule through each end and diffuses quickly throughout the lumen of microtubules. Acetylates only long/old microtubules because of its slow acetylation rate since it does not have time to act on dynamically unstable microtubules before the enzyme is released. This chain is Alpha-tubulin N-acetyltransferase, found in Leishmania major.